The chain runs to 435 residues: GTPase Der (435 aa).

EngA-type G domains are found at residues 3-168 (PTVA…PEDD) and 176-351 (VKLT…QNRR). GTP-binding positions include 9–16 (GRPNVGKS), 56–60 (DTGGY), 120–123 (NKVD), 182–189 (GRPNVGKS), 229–233 (DTAGL), and 294–297 (NKWD). The KH-like domain occupies 352–435 (MKIDTSRLNN…TPIELKFRRK (84 aa)).

Belongs to the TRAFAC class TrmE-Era-EngA-EngB-Septin-like GTPase superfamily. EngA (Der) GTPase family. As to quaternary structure, associates with the 50S ribosomal subunit.

Its function is as follows. GTPase that plays an essential role in the late steps of ribosome biogenesis. This chain is GTPase Der, found in Chloroherpeton thalassium (strain ATCC 35110 / GB-78).